A 209-amino-acid polypeptide reads, in one-letter code: Ribonuclease HII (209 aa).

The RNase H type-2 domain occupies 6–209; it reads SLEAGIDEAG…IKRMTNSRLF (204 aa). A divalent metal cation-binding residues include Asp12, Glu13, and Asp108.

It belongs to the RNase HII family. It depends on Mn(2+) as a cofactor. Mg(2+) is required as a cofactor.

Its subcellular location is the cytoplasm. It catalyses the reaction Endonucleolytic cleavage to 5'-phosphomonoester.. Functionally, endonuclease that specifically degrades the RNA of RNA-DNA hybrids. The chain is Ribonuclease HII from Caldivirga maquilingensis (strain ATCC 700844 / DSM 13496 / JCM 10307 / IC-167).